The following is a 434-amino-acid chain: Maintenance of mitochondrial morphology protein 1 (434 aa).

Residues 1-105 are Lumenal-facing; it reads MEMSELLASE…SFSSQSFAEG (105 aa). A helical transmembrane segment spans residues 106 to 126; it reads LIVGQLSVIVALIFVIKFFVF. Topologically, residues 127-434 are cytoplasmic; that stretch reads SEGGTKTATA…DDSVSVKSND (308 aa). The 215-residue stretch at 194–408 folds into the SMP-LTD domain; that stretch reads SPESLDWFNV…EPRFQFVKLP (215 aa). The tract at residues 415 to 434 is disordered; the sequence is KNTRKEKTDTDDSVSVKSND.

The protein belongs to the MMM1 family. In terms of assembly, homodimer. Component of the ER-mitochondria encounter structure (ERMES) or MDM complex, composed of MMM1, MDM10, MDM12 and MDM34. An MMM1 homodimer associates with one molecule of MDM12 on each side in a pairwise head-to-tail manner, and the SMP-LTD domains of MMM1 and MDM12 generate a continuous hydrophobic tunnel for phospholipid trafficking.

The protein localises to the endoplasmic reticulum membrane. Its function is as follows. Component of the ERMES/MDM complex, which serves as a molecular tether to connect the endoplasmic reticulum (ER) and mitochondria. Components of this complex are involved in the control of mitochondrial shape and protein biogenesis, and function in nonvesicular lipid trafficking between the ER and mitochondria. The MDM12-MMM1 subcomplex functions in the major beta-barrel assembly pathway that is responsible for biogenesis of all outer membrane beta-barrel proteins, and acts in a late step after the SAM complex. The MDM10-MDM12-MMM1 subcomplex further acts in the TOM40-specific pathway after the action of the MDM12-MMM1 complex. Essential for establishing and maintaining the structure of mitochondria and maintenance of mtDNA nucleoids. This Kluyveromyces lactis (strain ATCC 8585 / CBS 2359 / DSM 70799 / NBRC 1267 / NRRL Y-1140 / WM37) (Yeast) protein is Maintenance of mitochondrial morphology protein 1.